A 388-amino-acid polypeptide reads, in one-letter code: Oxytocin receptor (388 aa).

A disordered region spans residues 1–32 (MEGTPAANWSVELDLGSGVPPGEEGNRTAGPP). Residues 1–38 (MEGTPAANWSVELDLGSGVPPGEEGNRTAGPPQRNEAL) lie on the Extracellular side of the membrane. 2 N-linked (GlcNAc...) asparagine glycosylation sites follow: asparagine 8 and asparagine 26. A helical membrane pass occupies residues 39 to 63 (ARVEVAVLCLILFLALSGNACVLLA). Residues 64–74 (LRTTRHKHSRL) lie on the Cytoplasmic side of the membrane. Residues 75-97 (FFFMKHLSIADLVVAVFQVLPQL) form a helical membrane-spanning segment. At 98 to 113 (LWDITFRFYGPDLLCR) the chain is on the extracellular side. Cysteine 112 and cysteine 187 are joined by a disulfide. A helical transmembrane segment spans residues 114–135 (LVKYLQVVGMFASTYLLLLMSL). Residues 136 to 154 (DRCLAICQPLRSLRRRTDR) are Cytoplasmic-facing. Residues 155-175 (LAVLGTWLGCLVASAPQVHIF) form a helical membrane-spanning segment. At 176–202 (SLREVADGVFDCWAVFIQPWGPKAYVT) the chain is on the extracellular side. The chain crosses the membrane as a helical span at residues 203–225 (WITLAVYIVPVIVLAACYGLISF). The Cytoplasmic segment spans residues 226–274 (KIWQNLRLKTAAAAAAAEGNDAAGGAGRAALARVSSVKLISKAKIRTVK). A helical transmembrane segment spans residues 275 to 293 (MTFIIVLAFIVCWTPFFFV). Residues 294–308 (QMWSVWDVNAPKEAS) are Extracellular-facing. A helical transmembrane segment spans residues 309–331 (AFIIAMLLASLNSCCNPWIYMLF). Over 332–388 (TGHLFHELVQRFFCCSARYLKGSRPGETSVSKKSNSSTFVLSRRSSSQRSCSQPSSA) the chain is Cytoplasmic. Residues 354–388 (SRPGETSVSKKSNSSTFVLSRRSSSQRSCSQPSSA) form a disordered region. Residues serine 365 and serine 367 each carry the phosphoserine modification. The segment covering 365–388 (SNSSTFVLSRRSSSQRSCSQPSSA) has biased composition (low complexity).

Belongs to the G-protein coupled receptor 1 family. Vasopressin/oxytocin receptor subfamily.

Its subcellular location is the cell membrane. Functionally, receptor for oxytocin. The activity of this receptor is mediated by G proteins which activate a phosphatidylinositol-calcium second messenger system. The protein is Oxytocin receptor (Oxtr) of Rattus norvegicus (Rat).